We begin with the raw amino-acid sequence, 1240 residues long: DNA polymerase II large subunit (1240 aa).

This sequence belongs to the archaeal DNA polymerase II family. Heterodimer of a large subunit and a small subunit.

The catalysed reaction is DNA(n) + a 2'-deoxyribonucleoside 5'-triphosphate = DNA(n+1) + diphosphate. It catalyses the reaction Exonucleolytic cleavage in the 3'- to 5'-direction to yield nucleoside 5'-phosphates.. In terms of biological role, possesses two activities: a DNA synthesis (polymerase) and an exonucleolytic activity that degrades single-stranded DNA in the 3'- to 5'-direction. Has a template-primer preference which is characteristic of a replicative DNA polymerase. The protein is DNA polymerase II large subunit of Methanopyrus kandleri (strain AV19 / DSM 6324 / JCM 9639 / NBRC 100938).